The chain runs to 464 residues: MPSSLTPQQAAELNKSIIAYLSAHGLAETLAAFRKESDFPDNMFDATAAKQYENLLERKWTSNSTLMKKLLALESHNKALRNELNSTRPSFLNRNADVNDWLPQHPIRSLESHRDSINCIAFHPKYSLIASGSGDLTIRIWDWEDSTLERTLKGHTMAVCDVDYGDTSSGILLASCSSDFTIKLWDTTDDYKNVKTLRGHDHIVSAVRFIPSGNLLASASRDMKVILWNVINGYRVKTIEDHTGWVRDISPSFDGQFLLSTGDDMTVRLWEISASQPICKFTATGHENRILCCAVAPATSFRYLASFLESRGSTIAAEITATGSRDKSIKLWDSHGRCIMTLTGHASWVRAIAFHPGGKYLLSVSDDKTMRCWDLSQQGRCVKSISNAHDGFITCLKWVPGIAKDTRNGTMTISYQRKGSAELPRSKLDEVGQPGVQIRCVLATGGEDQKIRVFALQANDRSHK.

The region spanning 9-41 is the LisH domain; the sequence is QAAELNKSIIAYLSAHGLAETLAAFRKESDFPD. The stretch at 63–88 forms a coiled coil; it reads NSTLMKKLLALESHNKALRNELNSTR. 8 WD repeats span residues 112-151, 154-195, 199-238, 241-280, 285-343, 344-383, 388-424, and 426-464; these read SHRD…LERT, GHTM…KNVK, GHDH…RVKT, DHTG…PICK, GHEN…MTLT, GHAS…RCVK, AHDG…AELP, and SKLD…RSHK.

It belongs to the WD repeat LIS1/nudF family. As to quaternary structure, self-associates. Interacts with nudE and dynein.

It localises to the cytoplasm. Its subcellular location is the cytoskeleton. The protein localises to the spindle pole. Functionally, positively regulates the activity of the minus-end directed microtubule motor protein dynein. May enhance dynein-mediated microtubule sliding by targeting dynein to the microtubule plus end. Required for nuclear migration during vegetative growth as well as development. Required for retrograde early endosome (EE) transport from the hyphal tip. Required for localization of dynein to the mitotic spindle poles. Recruits additional proteins to the dynein complex at SPBs. The chain is Nuclear distribution protein nudF 2 from Penicillium rubens (strain ATCC 28089 / DSM 1075 / NRRL 1951 / Wisconsin 54-1255) (Penicillium chrysogenum).